Consider the following 476-residue polypeptide: NADH-quinone oxidoreductase subunit N (476 aa).

The next 14 membrane-spanning stretches (helical) occupy residues Ala10–Ile30, Leu42–Ile62, Phe77–Leu97, Ala108–Ile128, Ala129–Arg149, Phe162–Phe182, Leu202–Phe222, Pro234–Val254, Trp268–Ile288, Leu296–Thr316, Val323–Ala343, Ala368–Val388, Tyr392–Ala412, and Ala445–Ile465.

The protein belongs to the complex I subunit 2 family. As to quaternary structure, NDH-1 is composed of 14 different subunits. Subunits NuoA, H, J, K, L, M, N constitute the membrane sector of the complex.

The protein localises to the cell inner membrane. The enzyme catalyses a quinone + NADH + 5 H(+)(in) = a quinol + NAD(+) + 4 H(+)(out). In terms of biological role, NDH-1 shuttles electrons from NADH, via FMN and iron-sulfur (Fe-S) centers, to quinones in the respiratory chain. The immediate electron acceptor for the enzyme in this species is believed to be ubiquinone. Couples the redox reaction to proton translocation (for every two electrons transferred, four hydrogen ions are translocated across the cytoplasmic membrane), and thus conserves the redox energy in a proton gradient. The polypeptide is NADH-quinone oxidoreductase subunit N (Azorhizobium caulinodans (strain ATCC 43989 / DSM 5975 / JCM 20966 / LMG 6465 / NBRC 14845 / NCIMB 13405 / ORS 571)).